The sequence spans 213 residues: Outer-membrane lipoprotein carrier protein (213 aa).

Positions 1–23 (MKKLLKQSLLGFALVSMTGAAFA) are cleaved as a signal peptide.

It belongs to the LolA family. As to quaternary structure, monomer.

The protein resides in the periplasm. Functionally, participates in the translocation of lipoproteins from the inner membrane to the outer membrane. Only forms a complex with a lipoprotein if the residue after the N-terminal Cys is not an aspartate (The Asp acts as a targeting signal to indicate that the lipoprotein should stay in the inner membrane). The chain is Outer-membrane lipoprotein carrier protein from Actinobacillus pleuropneumoniae serotype 3 (strain JL03).